The sequence spans 479 residues: Ribulose bisphosphate carboxylase large chain (479 aa).

Residues 1-2 (MS) constitute a propeptide that is removed on maturation. Pro-3 carries the N-acetylproline modification. Substrate is bound by residues Thr-65, Asn-123, 173–177 (TIKPK), and 201–204 (KDDE). Lys-175 (proton acceptor) is an active-site residue. The Mg(2+) site is built by Lys-201, Asp-203, and Glu-204. Lys-201 is modified (N6-carboxylysine). Residue Ser-208 is modified to Phosphoserine. The active-site Proton acceptor is the His-294. Substrate is bound by residues 294–295 (HR) and His-327. Thr-330 is subject to Phosphothreonine. Residues Lys-334 and 379–381 (SGG) each bind substrate.

This sequence belongs to the RuBisCO large chain family. Type I subfamily. In terms of assembly, heterohexadecamer of 8 large chains and 8 small chains; disulfide-linked. The disulfide link is formed within the large subunit homodimers. Interacts with RBCX1 and RBCX1. An intermediate complex made of eight RbcL subunits interacts with the chaperone BSD2. The cofactor is Mg(2+). In terms of processing, the disulfide bond which can form in the large chain dimeric partners within the hexadecamer appears to be associated with oxidative stress and protein turnover.

It is found in the plastid. Its subcellular location is the chloroplast. It carries out the reaction 2 (2R)-3-phosphoglycerate + 2 H(+) = D-ribulose 1,5-bisphosphate + CO2 + H2O. The enzyme catalyses D-ribulose 1,5-bisphosphate + O2 = 2-phosphoglycolate + (2R)-3-phosphoglycerate + 2 H(+). Its function is as follows. RuBisCO catalyzes two reactions: the carboxylation of D-ribulose 1,5-bisphosphate, the primary event in carbon dioxide fixation, as well as the oxidative fragmentation of the pentose substrate in the photorespiration process. Both reactions occur simultaneously and in competition at the same active site. Binds to abscisic acid (ABA). The sequence is that of Ribulose bisphosphate carboxylase large chain from Arabidopsis thaliana (Mouse-ear cress).